The primary structure comprises 1786 residues: uncharacterized protein (1786 aa).

Disordered regions lie at residues 140 to 191 (QGLR…LPEA), 203 to 329 (RRES…RGGV), and 400 to 480 (GGSD…TPPE). The span at 149-158 (SDMNSQTSLT) shows a compositional bias: polar residues. Residues 232–247 (GHAPEAPAPGESPASS) are compositionally biased toward low complexity. Residues 248 to 259 (QCLPSQACENDF) are compositionally biased toward polar residues. A compositionally biased stretch (basic and acidic residues) spans 306-329 (TSCRQHREEAGDRAGAGEDKRGGV). Residues 422–438 (STTPSTNTTRTPSPISS) show a composition bias toward low complexity. A compositionally biased stretch (pro residues) spans 467 to 480 (VPPPTGPGTATPPE). The residue at position 721 (T721) is a Phosphothreonine. Disordered regions lie at residues 746-907 (SESK…SDGH), 1081-1180 (VRDV…NSSP), 1218-1242 (ASAQRTPEKPKEEEAKEEGKAPKPA), 1291-1348 (KEGV…VSAR), 1362-1460 (SLYI…NSDC), and 1477-1550 (LLGR…EHTP). Composition is skewed to basic and acidic residues over residues 810–828 (MQREHEFKMERGEVTDTSH) and 845–861 (KPWERGLQRQSSRHSEA). Residues 1105 to 1115 (KGSGDSSDKGS) are compositionally biased toward low complexity. The span at 1131–1140 (TPASGGSRSL) shows a compositional bias: polar residues. Residues 1153–1164 (PREEGVDREPRE) show a composition bias toward basic and acidic residues. Polar residues predominate over residues 1167–1180 (SQVSNGGRLLNSSP). Phosphoserine is present on S1179. Basic and acidic residues-rich tracts occupy residues 1223-1238 (TPEKPKEEEAKEEGKA) and 1301-1319 (DPDKLAKQLGQVEERDTGH). Polar residues-rich tracts occupy residues 1336 to 1345 (RNSNPSTESV), 1389 to 1401 (NVFTVSSSSTQKT), and 1504 to 1521 (ARSQVPSNPKGSQVSGTS). R1767 is modified (omega-N-methylarginine).

This is an uncharacterized protein from Mus musculus (Mouse).